The primary structure comprises 432 residues: Adenylosuccinate synthetase (432 aa).

Residues Gly-13–Lys-19 and Gly-41–Thr-43 each bind GTP. Asp-14 acts as the Proton acceptor in catalysis. Positions 14 and 41 each coordinate Mg(2+). Residues Asp-14 to Lys-17, Asn-39 to His-42, Thr-130, Arg-144, Gln-225, Thr-240, and Arg-304 contribute to the IMP site. The active-site Proton donor is His-42. Ala-300 to Arg-306 is a binding site for substrate. Residues Arg-306, Lys-332–Asp-334, and Ser-415–Gly-417 contribute to the GTP site.

The protein belongs to the adenylosuccinate synthetase family. In terms of assembly, homodimer. The cofactor is Mg(2+).

It localises to the cytoplasm. It catalyses the reaction IMP + L-aspartate + GTP = N(6)-(1,2-dicarboxyethyl)-AMP + GDP + phosphate + 2 H(+). It participates in purine metabolism; AMP biosynthesis via de novo pathway; AMP from IMP: step 1/2. Its function is as follows. Plays an important role in the de novo pathway of purine nucleotide biosynthesis. Catalyzes the first committed step in the biosynthesis of AMP from IMP. This chain is Adenylosuccinate synthetase, found in Mannheimia succiniciproducens (strain KCTC 0769BP / MBEL55E).